A 151-amino-acid chain; its full sequence is Macrodomain Ter protein (151 aa).

Belongs to the MatP family. As to quaternary structure, homodimer.

It is found in the cytoplasm. Required for spatial organization of the terminus region of the chromosome (Ter macrodomain) during the cell cycle. Prevents early segregation of duplicated Ter macrodomains during cell division. Binds specifically to matS, which is a 13 bp signature motif repeated within the Ter macrodomain. This Yersinia pseudotuberculosis serotype IB (strain PB1/+) protein is Macrodomain Ter protein.